Reading from the N-terminus, the 330-residue chain is Probable inactive heme oxygenase 2, chloroplastic (330 aa).

2 stretches are compositionally biased toward low complexity: residues 1–13 and 56–69; these read MPLAAAVAASAVV and AAEAEAEAVAVDEA. 3 disordered regions span residues 1 to 27, 50 to 82, and 107 to 156; these read MPLAAAVAASAVVPPRPPPPPPRRARP, PSPPAPAAEAEAEAVAVDEAPPAKPRPRRYPRQ, and TTLK…LEGE. The N-terminal 47 residues, 1 to 47, are a transit peptide targeting the chloroplast; it reads MPLAAAVAASAVVPPRPPPPPPRRARPLRSFTGLILTRDLAALTVAR. Residues 114–151 are compositionally biased toward acidic residues; the sequence is TGAEEEVGDGVSEDASASEEEEEEEDDDDVVEEEEEGA.

The protein belongs to the heme oxygenase family.

It localises to the plastid. The protein resides in the chloroplast. Functionally, probable inactive heme oxygenase that may play a role in the regulation of phytochrome assembly and photomorphogenesis. The sequence is that of Probable inactive heme oxygenase 2, chloroplastic (HO2) from Oryza sativa subsp. japonica (Rice).